Here is a 675-residue protein sequence, read N- to C-terminus: Methionine--tRNA ligase (675 aa).

The short motif at 12–22 (PYANGPIHLGH) is the 'HIGH' region element. Residues Cys143, Cys146, Cys156, and Cys159 each coordinate Zn(2+). Positions 328 to 332 (KMSKS) match the 'KMSKS' region motif. An ATP-binding site is contributed by Lys331. A tRNA-binding domain is found at 574-675 (DFAKVDLRIA…QGAQPGMRVK (102 aa)).

This sequence belongs to the class-I aminoacyl-tRNA synthetase family. MetG type 1 subfamily. Homodimer. Zn(2+) serves as cofactor.

The protein localises to the cytoplasm. It carries out the reaction tRNA(Met) + L-methionine + ATP = L-methionyl-tRNA(Met) + AMP + diphosphate. Is required not only for elongation of protein synthesis but also for the initiation of all mRNA translation through initiator tRNA(fMet) aminoacylation. The polypeptide is Methionine--tRNA ligase (Alkalilimnicola ehrlichii (strain ATCC BAA-1101 / DSM 17681 / MLHE-1)).